The following is a 675-amino-acid chain: Methionine--tRNA ligase (675 aa).

A 'HIGH' region motif is present at residues 15-25 (PYANGSIHLGH). 4 residues coordinate Zn(2+): cysteine 146, cysteine 149, cysteine 159, and cysteine 162. Positions 332-336 (KMSKS) match the 'KMSKS' region motif. An ATP-binding site is contributed by lysine 335. Positions 573–675 (DFAKVDMRIA…SGAQPGMQVK (103 aa)) constitute a tRNA-binding domain.

Belongs to the class-I aminoacyl-tRNA synthetase family. MetG type 1 subfamily. In terms of assembly, homodimer. Zn(2+) is required as a cofactor.

It localises to the cytoplasm. The catalysed reaction is tRNA(Met) + L-methionine + ATP = L-methionyl-tRNA(Met) + AMP + diphosphate. In terms of biological role, is required not only for elongation of protein synthesis but also for the initiation of all mRNA translation through initiator tRNA(fMet) aminoacylation. This chain is Methionine--tRNA ligase, found in Yersinia pestis bv. Antiqua (strain Angola).